The following is a 178-amino-acid chain: Disulfide bond formation protein B (178 aa).

Topologically, residues 1 to 14 (MLSFFKTLSMGRSG) are cytoplasmic. The chain crosses the membrane as a helical span at residues 15 to 31 (WLLLAFSALVLELVALY). Residues 32 to 49 (FQYGMQLQPCVMCVYERV) lie on the Periplasmic side of the membrane. The cysteines at positions 41 and 44 are disulfide-linked. Residues 50 to 65 (ALGGILFAGIIGAIAP) traverse the membrane as a helical segment. Residues 66–72 (SSWFFRF) are Cytoplasmic-facing. A helical membrane pass occupies residues 73-90 (LGIIIGLGASVKGFLLAL). Residues 91-145 (KHVDYQLNPAPWNQCAYLPEFPQTLPLDQWFPYLFKPIGSCSDIQWSFLGFSMAQ) lie on the Periplasmic side of the membrane. Cysteine 105 and cysteine 131 are oxidised to a cystine. Residues 146–164 (WILVMFAFYSILLAIILIS) traverse the membrane as a helical segment. Topologically, residues 165 to 178 (QVKAGKPKHREIFR) are cytoplasmic.

This sequence belongs to the DsbB family.

The protein resides in the cell inner membrane. In terms of biological role, required for disulfide bond formation in some periplasmic proteins. Acts by oxidizing the DsbA protein. This chain is Disulfide bond formation protein B, found in Mannheimia succiniciproducens (strain KCTC 0769BP / MBEL55E).